The chain runs to 557 residues: Tryptophan 2-monooxygenase (557 aa).

FMN-binding residues include Ser49, Glu69, Arg71, Arg77, and Arg98. Arg98 is a binding site for substrate.

The protein belongs to the tryptophan 2-monooxygenase family. As to quaternary structure, monomer. It depends on FMN as a cofactor.

It catalyses the reaction L-tryptophan + O2 = indole-3-acetamide + CO2 + H2O. Its pathway is plant hormone metabolism; auxin biosynthesis. The sequence is that of Tryptophan 2-monooxygenase (iaaM) from Pseudomonas savastanoi (Pseudomonas syringae pv. savastanoi).